We begin with the raw amino-acid sequence, 1927 residues long: MNRILTLFILFISLFIVCEATHFRFGTMSWMPMGSHNTIKFSSNYAFRIGFFKKFNKGCNVGDVVKVGDLDLGDDKTKVDVNLVVTSVNQADDWFTGEFSYTHTYNPIKLGGKAVTYKVVFTDCCRIKSLLNNAEGSWYISTSVVVDPNQGSDVSTFNRSPVSGMVPIITLNRDKNNQFLIAASDPNGDTLTYSLSNAYTMNQPSGLSIDSSKGIVSFKPTVSGFYSTQIMIKDTKGAYVVVDFLINSVIEPGVCHPSCSNGGNTCNGNSGCKSCKGTDSNGNTCSSFPPVFVYPPTPTDGSLLAYEVNKTNSFSIQCKTEEKSKTVFIQPANIPLAATLTSSDQNKQVSTLTYSMLPQLKHIGVYVISAYCTDNKGLVSTITSFSISVEKPICGHGTNKPGGGCNCETGWDPEKNCYECLKGHYGEKCDPVDPCVNGESNEGSQGNGKCTCYYGWEGKNCDIKVNQVCNANKENVVLDSSVAKSSYINPNFAQVYLNTDPSKQALTLSSKLSIPETIDKFEVLVLVDSQPSIVEYWDNFKKYSSDLTKNLQDISETVSIGLGLFSDAKTNGYSFVLKKSIGNGLSGLDDKDKAPASSYSTKNSLIALTSAAEFPAGWSTGSIKIIVLLTDNDYSATAQEVSKFTSTLISKSILPVVVSFNDNQNWDTLFKNQGFGSTKKTSNAKGNDWVSVATSAIKDVLSKAVVKAIDDTKGFLTLPSATTISIEDSKDYTIPIQIKYPQGQSDIPQNPSVSYSVVGFGITRIVINYNSAPTALGYSIETKQNVNYNFKLSGSDVDGNTLTIKFKTIPAASVGVIQADGVTIEQGDSFSIEKTFTFKPATNYYTKSTNDKFTFVANDGCLDSNEATVEIKITHVNQAPSCSSLSGSAISVTGLNTPKSFSLQGSDIETDSNLKIVFGDLTAISAYGNIKSGSNVVSTGSSVQLSSGSASLTFTQTKDIANDKEITVDFKVNDGSLDSSSSCSFKVKFVHFNKPPVAFAVTPLTIRQNSELKITISASDSDSDSVIFTLDDLKLGGGDSFFKCDDRSQLTAPFTTQPVSISGGVASFSEICYSSPLVNANSYASLVFFANDGQLSSDKFKVLININGDRPNAPPVVNQIPNFTMNEDDISNELVIDGIDPDELDQGKLKGIIIQKPTNGVILVKSGSSTSEAPIIGNAPYKIFYKPNPLYYGTDSFSYTVEDSMGERDATPKTTQITVQHVNHAPTLSIDPYDFTSQTSEKTLELTPKDIDLIDTVFHCTIVKLPATAIIKTSAGKVIDTVPTDLSDNKYIITSNNNIYNDFSDSFDAKCYDSSNAVSNIATGPITFRYINVPPKAESSDETLNQDSSVSFSVKATDLEDNSNVRAVIRSLPAKGTLTIKSTGKAAEISSTYAIDDFVYTPVAGYSNWDKPGHVGPADSFNFVAKDSKNDISSNIGTVSFFIEPRNPPTYEGLAVLYTKENTDLPFSISGIVGNGGSNVFLRIKSIVSRGSLYATHCMGTEGCMSEPNPVDININFTSQPYTFSFTPIEYENGDNYAIIEFVLYDKFNGQEVESQKYTIIINVIPVNQAPEVILIEHTLSTLPNNVIAFDKFKTVKMETNSYVIIKYDGTDIDDPKEKLKSYIVSPPLRGLLYVYDKDAKDGLGKLIKKDDTFVPVAQDGFWYIVFVPTPGSSGDGYVRIPISMVDFLGDISVPVTVAVDVSKKNIPPFITIENKNYTSLANTSIVVTGVSFDDPDSKYNDVELILSLVNKDGDLVSNKIATFSLSQQSKAKCTKHSEFAQFTCRSNKKTLNALISTMYVNHQGGGSYRLKVFVNDLGYSSPASIRDKNHMTATDYVELDVTKPEVTTTKENNNKTVLTGAIAGAAAGAGLLAAGAWFLLKKSAPPTDAFFGEGAFADGAVSTNPMYEESGRSAINPLYEASSENL.

Positions 1 to 20 (MNRILTLFILFISLFIVCEA) are cleaved as a signal peptide. Over 21–1860 (THFRFGTMSW…KENNNKTVLT (1840 aa)) the chain is Extracellular. Residue asparagine 309 is glycosylated (N-linked (GlcNAc...) asparagine). The region spanning 425–462 (YGEKCDPVDPCVNGESNEGSQGNGKCTCYYGWEGKNCD) is the EGF-like domain. Disulfide bonds link cysteine 435–cysteine 450 and cysteine 452–cysteine 461. In terms of domain architecture, VWFA spans 522 to 709 (EVLVLVDSQP…VLSKAVVKAI (188 aa)). Asparagine 1122, asparagine 1516, asparagine 1717, asparagine 1723, and asparagine 1855 each carry an N-linked (GlcNAc...) asparagine glycan. The helical transmembrane segment at 1861–1881 (GAIAGAAAGAGLLAAGAWFLL) threads the bilayer. Residues 1882-1927 (KKSAPPTDAFFGEGAFADGAVSTNPMYEESGRSAINPLYEASSENL) are Cytoplasmic-facing.

Belongs to the SIB family. Interacts with talA/talin.

It localises to the membrane. Its function is as follows. Implicated in cellular adhesion to substrate or phagocytic particles. The chain is Integrin beta-like protein A (sibA) from Dictyostelium discoideum (Social amoeba).